Reading from the N-terminus, the 331-residue chain is 6-phosphogluconolactonase (331 aa).

This sequence belongs to the cycloisomerase 2 family.

It carries out the reaction 6-phospho-D-glucono-1,5-lactone + H2O = 6-phospho-D-gluconate + H(+). Its pathway is carbohydrate degradation; pentose phosphate pathway; D-ribulose 5-phosphate from D-glucose 6-phosphate (oxidative stage): step 2/3. Its function is as follows. Catalyzes the hydrolysis of 6-phosphogluconolactone to 6-phosphogluconate. This chain is 6-phosphogluconolactonase, found in Serratia proteamaculans (strain 568).